Reading from the N-terminus, the 1192-residue chain is Protein pangolin, isoform J (1192 aa).

Positions 351-357 (LGLPSEE) match the Nuclear localization signal motif. A disordered region spans residues 691-713 (AKHTSNAQSNESKETTNDKKKPH). A DNA-binding region (HMG box) is located at residues 714–782 (IKKPLNAFML…LHMELYPGWS (69 aa)). Disordered regions lie at residues 790-812 (VSKK…NMKK), 847-916 (PAED…SPST), 955-986 (QRPT…VSPV), and 1136-1192 (QLNN…ISVS). Positions 862–871 (SDDDEDDYDD) are enriched in acidic residues. Low complexity-rich tracts occupy residues 898–915 (SMPS…QSPS) and 957–986 (PTLV…VSPV). Polar residues-rich tracts occupy residues 1140 to 1162 (RTEN…VNSS) and 1170 to 1192 (SQAI…ISVS).

This sequence belongs to the TCF/LEF family. As to quaternary structure, binds to the beta-catenin homolog arm or to gro.

It is found in the nucleus. In terms of biological role, segment polarity protein. Functions together with arm to transduce the Wingless (Wg) signal in embryos and in developing adult tissues. Acts as a transcriptional activator, but in the absence of arm, it binds to gro and acts as a transcriptional repressor of wg-responsive genes. The polypeptide is Protein pangolin, isoform J (Drosophila melanogaster (Fruit fly)).